The sequence spans 800 residues: DNA topoisomerase 4 subunit A (800 aa).

Positions 31 to 495 (LPDVRDGLKP…EIEEIKIDKE (465 aa)) constitute a Topo IIA-type catalytic domain. Residue tyrosine 119 is the O-(5'-phospho-DNA)-tyrosine intermediate of the active site.

It belongs to the type II topoisomerase GyrA/ParC subunit family. ParC type 2 subfamily. Heterotetramer composed of ParC and ParE.

It localises to the cell membrane. It carries out the reaction ATP-dependent breakage, passage and rejoining of double-stranded DNA.. Its function is as follows. Topoisomerase IV is essential for chromosome segregation. It relaxes supercoiled DNA. Performs the decatenation events required during the replication of a circular DNA molecule. The sequence is that of DNA topoisomerase 4 subunit A from Staphylococcus aureus (strain MRSA252).